A 275-amino-acid polypeptide reads, in one-letter code: MANIKAKKYYSYAKINLFLHILNKRTDGYHNLQTWFTFLDLKDQLTFSFNNSREINISSNISIAAKQDNLVYKAIKKFQQSYRVQDIGVDIEIKKNIPMGAGLGGGSSNAATTLIALRDYYLPQLSNEEMIPLAAKLGADVSIFVYGKSAWAEGIGEILYHKDFSPQYALLIKPDIHISTKEFFTSEDLIKSSVLISKDLGFDKSIMHNDFENVFYAKYPEFSQYLKELDSDFRMTGTGSCFYLLSADKNKLEQLARKINKPLDKWLVKTLNYVY.

Residue Lys14 is part of the active site. Residue 98 to 108 (PMGAGLGGGSS) participates in ATP binding. Asp140 is an active-site residue.

This sequence belongs to the GHMP kinase family. IspE subfamily.

It carries out the reaction 4-CDP-2-C-methyl-D-erythritol + ATP = 4-CDP-2-C-methyl-D-erythritol 2-phosphate + ADP + H(+). Its pathway is isoprenoid biosynthesis; isopentenyl diphosphate biosynthesis via DXP pathway; isopentenyl diphosphate from 1-deoxy-D-xylulose 5-phosphate: step 3/6. In terms of biological role, catalyzes the phosphorylation of the position 2 hydroxy group of 4-diphosphocytidyl-2C-methyl-D-erythritol. This chain is 4-diphosphocytidyl-2-C-methyl-D-erythritol kinase, found in Francisella tularensis subsp. tularensis (strain WY96-3418).